Consider the following 224-residue polypeptide: uncharacterized protein (224 aa).

This is an uncharacterized protein from Mycobacterium tuberculosis (strain CDC 1551 / Oshkosh).